A 1297-amino-acid chain; its full sequence is Probable bifunctional E2/E3 enzyme R795 (1297 aa).

The RING-type; atypical zinc-finger motif lies at 74-128 (CAICRYQENEPCIEHKSSESNTKCPIAQSVSCSHSFHACCISRWLHTKKTCPLCN). Positions 678–750 (EPLQEFLCPI…RDWKENNTVI (73 aa)) constitute a U-box domain. Residues 899–1082 (EMTLEIHSSN…LDIMELETMI (184 aa)) enclose the VWFA domain. The region spanning 1133–1279 (QKLIRVQREI…IIDYVNKFAL (147 aa)) is the UBC core domain. Catalysis depends on Cys1217, which acts as the Glycyl thioester intermediate.

It in the C-terminal section; belongs to the ubiquitin-conjugating enzyme family.

The catalysed reaction is S-ubiquitinyl-[E2 ubiquitin-conjugating enzyme]-L-cysteine + [acceptor protein]-L-lysine = [E2 ubiquitin-conjugating enzyme]-L-cysteine + N(6)-ubiquitinyl-[acceptor protein]-L-lysine.. The enzyme catalyses S-ubiquitinyl-[E1 ubiquitin-activating enzyme]-L-cysteine + [E2 ubiquitin-conjugating enzyme]-L-cysteine = [E1 ubiquitin-activating enzyme]-L-cysteine + S-ubiquitinyl-[E2 ubiquitin-conjugating enzyme]-L-cysteine.. It participates in protein modification; protein ubiquitination. In terms of biological role, catalyzes the covalent attachment of ubiquitin to other proteins. Also acts as an E3 ubiquitin-protein ligase. The chain is Probable bifunctional E2/E3 enzyme R795 from Acanthamoeba polyphaga (Amoeba).